Here is a 214-residue protein sequence, read N- to C-terminus: Protein verrocchio (214 aa).

In terms of assembly, probably homomultimerizes. Component of the MTV complex, composed of moi/modigliani, tea and ver/verrocchio. Interacts with moi/modigliani and tea (via C-terminus); the interactions are direct and require fully intact moi/modigliani and ver/verrocchio. The MTV complex is recruited to telomeres by the HipHop-HOAP complex, consisting of HipHop, cav/HOAP and Su(var)205/HP1 to form the terminin telomere-capping complex. Interacts with cav/HOAP; the interaction is direct. Interacts with Su(var)205/HP1; the interaction is indirect and probably requires cav/HOAP or moi/modigliani. Probably interacts with peo (via N-terminus and UBC domain).

The protein resides in the nucleus. The protein localises to the chromosome. It localises to the telomere. In terms of biological role, part of the MTV complex that associates with the HipHop-HOAP complex to form the terminin telomere-capping complex involved in telomere maintenance and prevention of telomere fusion. As part of the MTV complex binds single stranded DNA in a sequence-independent manner, protecting it from degradation. This chain is Protein verrocchio, found in Drosophila melanogaster (Fruit fly).